The primary structure comprises 470 residues: Glutamate--tRNA ligase (470 aa).

The short motif at 9–19 is the 'HIGH' region element; sequence PSPTGYLHVGG. The 'KMSKS' region motif lies at 236 to 240; it reads RLSKR. Residue K239 participates in ATP binding.

This sequence belongs to the class-I aminoacyl-tRNA synthetase family. Glutamate--tRNA ligase type 1 subfamily. As to quaternary structure, monomer.

The protein resides in the cytoplasm. The catalysed reaction is tRNA(Glu) + L-glutamate + ATP = L-glutamyl-tRNA(Glu) + AMP + diphosphate. In terms of biological role, catalyzes the attachment of glutamate to tRNA(Glu) in a two-step reaction: glutamate is first activated by ATP to form Glu-AMP and then transferred to the acceptor end of tRNA(Glu). This chain is Glutamate--tRNA ligase, found in Colwellia psychrerythraea (strain 34H / ATCC BAA-681) (Vibrio psychroerythus).